The following is a 532-amino-acid chain: CTP synthase (532 aa).

The amidoligase domain stretch occupies residues Met1 to Leu267. Residue Ser13 coordinates CTP. Ser13 is a UTP binding site. Gly14 to Ile19 serves as a coordination point for ATP. Tyr54 is an L-glutamine binding site. Asp71 provides a ligand contact to ATP. Mg(2+) contacts are provided by Asp71 and Glu141. Residues Asp148–Glu150, Lys188–Gln193, and Lys224 contribute to the CTP site. UTP contacts are provided by residues Lys188 to Gln193 and Lys224. In terms of domain architecture, Glutamine amidotransferase type-1 spans Glu292–Lys532. L-glutamine is bound at residue Gly354. Cys381 functions as the Nucleophile; for glutamine hydrolysis in the catalytic mechanism. L-glutamine-binding positions include Leu382–Gln385, Glu405, and Arg461. Catalysis depends on residues His506 and Glu508.

This sequence belongs to the CTP synthase family. As to quaternary structure, homotetramer.

It catalyses the reaction UTP + L-glutamine + ATP + H2O = CTP + L-glutamate + ADP + phosphate + 2 H(+). It carries out the reaction L-glutamine + H2O = L-glutamate + NH4(+). The enzyme catalyses UTP + NH4(+) + ATP = CTP + ADP + phosphate + 2 H(+). Its pathway is pyrimidine metabolism; CTP biosynthesis via de novo pathway; CTP from UDP: step 2/2. Its activity is regulated as follows. Allosterically activated by GTP, when glutamine is the substrate; GTP has no effect on the reaction when ammonia is the substrate. The allosteric effector GTP functions by stabilizing the protein conformation that binds the tetrahedral intermediate(s) formed during glutamine hydrolysis. Inhibited by the product CTP, via allosteric rather than competitive inhibition. Functionally, catalyzes the ATP-dependent amination of UTP to CTP with either L-glutamine or ammonia as the source of nitrogen. Regulates intracellular CTP levels through interactions with the four ribonucleotide triphosphates. In Mycoplasma mycoides subsp. mycoides SC (strain CCUG 32753 / NCTC 10114 / PG1), this protein is CTP synthase.